Consider the following 782-residue polypeptide: Transcription factor SOX-30 (782 aa).

3 disordered regions span residues 1 to 37, 95 to 117, and 139 to 226; these read MERA…AQPV, LPPG…AAAA, and PPQS…DALK. Composition is skewed to pro residues over residues 7–35 and 97–106; these read EPPP…PPAQ and PGGPGVPPAP. Over residues 203–226 the composition is skewed to basic and acidic residues; sequence LDGRRSDEKKAKLEAEEAPRDALK. A DNA-binding region (HMG box) is located at residues 366-434; the sequence is VKRPMNAFMV…KHREEFPGWV (69 aa). Disordered stretches follow at residues 501-604, 704-724, and 756-782; these read PTPA…STCP, YPDE…DGPP, and ASAP…LRNL. The span at 512–522 shows a compositional bias: polar residues; sequence TLFQPSVSSTG. Pro residues predominate over residues 525–538; sequence AVPPPSLTPRPSLP. Over residues 555-574 the composition is skewed to polar residues; sequence SGSSRSVKRSTPGSLESTTR. A compositionally biased stretch (basic and acidic residues) spans 704 to 718; that stretch reads YPDEHTHSEDSRSCE.

Interacts with CTNNB1, competitively inhibiting CTNNB1-TCF7L2/TCF4 interaction. As to expression, expressed in the lung (at protein level). Expressed in testes (at protein level). Expressed in preleptotene spermatocytes, round spermatids, and elongated spermatids in the testis (at protein level). Expressed in pachytene spermatocytes during stages 3 to 8 of spermatogenesis (at protein level). Increased expression in diplotene spermatocytes at stage 9-11 and in metaphase spermatocytes or secondary spermatocytes at stage 12. Expressed in ovaries.

It is found in the nucleus. Its subcellular location is the cytoplasm. Its function is as follows. Acts both as a transcriptional activator and a repressor. Binds to the DNA sequence 5'-ACAAT-3' and shows a preference for guanine residues surrounding this core motif. Binds to its own promoter and activates its own transcription. Required to activate the expression of postmeiotic genes involved in spermiogenesis. Binds to the promoter region of CTNNB1 and represses its transcription which leads to inhibition of Wnt signaling. Also inhibits Wnt signaling by binding to the CTNNB1 protein, preventing interaction of CTNNB1 with TCF7L2/TCF4. In Mus musculus (Mouse), this protein is Transcription factor SOX-30 (Sox30).